Here is a 457-residue protein sequence, read N- to C-terminus: C4-dicarboxylate transport protein (457 aa).

A run of 7 helical transmembrane segments spans residues 20-42 (LYFQVVVAIVLGALLGHFEPAFA), 51-73 (AFIKLVKMIIAPVIFLTIVTGIA), 88-110 (AMAYFLFFSTLALVVGLVVAHVV), 138-158 (LTLVGFLMDIIPNSLIGAFTG), 166-188 (LTGPNILQVLFVAVLFGVSLALV), 212-234 (ILMRAAPIGAFGAIAFTIGKYGV), and 241-263 (AWLVGSFYLTSLLFVLVILGLVS).

The protein belongs to the dicarboxylate/amino acid:cation symporter (DAACS) (TC 2.A.23) family.

The protein resides in the cell inner membrane. In terms of biological role, responsible for the transport of dicarboxylates such as succinate, fumarate, and malate from the periplasm across the membrane. This chain is C4-dicarboxylate transport protein, found in Xanthomonas axonopodis pv. citri (strain 306).